Consider the following 291-residue polypeptide: Tyrosine recombinase XerD (291 aa).

Residues 1–82 (MEEGLIDRLL…ACKRLYIWME (82 aa)) form the Core-binding (CB) domain. The 183-residue stretch at 103-285 (NIPTLITEQQ…ANVWLQGVVK (183 aa)) folds into the Tyr recombinase domain. Active-site residues include R143, K167, H237, R240, and H263. The active-site O-(3'-phospho-DNA)-tyrosine intermediate is Y272.

It belongs to the 'phage' integrase family. XerD subfamily. As to quaternary structure, forms a cyclic heterotetrameric complex composed of two molecules of XerC and two molecules of XerD.

The protein resides in the cytoplasm. Its function is as follows. Site-specific tyrosine recombinase, which acts by catalyzing the cutting and rejoining of the recombining DNA molecules. The XerC-XerD complex is essential to convert dimers of the bacterial chromosome into monomers to permit their segregation at cell division. It also contributes to the segregational stability of plasmids. The protein is Tyrosine recombinase XerD of Neisseria meningitidis serogroup A / serotype 4A (strain DSM 15465 / Z2491).